Here is a 453-residue protein sequence, read N- to C-terminus: Ribulose bisphosphate carboxylase large chain (453 aa).

Residues 1–2 constitute a propeptide that is removed on maturation; sequence MS. Pro3 bears the N-acetylproline mark. Lys14 carries the post-translational modification N6,N6,N6-trimethyllysine. The substrate site is built by Asn123 and Thr173. Lys175 serves as the catalytic Proton acceptor. Lys177 serves as a coordination point for substrate. 3 residues coordinate Mg(2+): Lys201, Asp203, and Glu204. Lys201 is modified (N6-carboxylysine). His294 functions as the Proton acceptor in the catalytic mechanism. Substrate-binding residues include Arg295, His327, and Ser379.

The protein belongs to the RuBisCO large chain family. Type I subfamily. Heterohexadecamer of 8 large chains and 8 small chains; disulfide-linked. The disulfide link is formed within the large subunit homodimers. The cofactor is Mg(2+). In terms of processing, the disulfide bond which can form in the large chain dimeric partners within the hexadecamer appears to be associated with oxidative stress and protein turnover.

It localises to the plastid. Its subcellular location is the chloroplast. It carries out the reaction 2 (2R)-3-phosphoglycerate + 2 H(+) = D-ribulose 1,5-bisphosphate + CO2 + H2O. The enzyme catalyses D-ribulose 1,5-bisphosphate + O2 = 2-phosphoglycolate + (2R)-3-phosphoglycerate + 2 H(+). RuBisCO catalyzes two reactions: the carboxylation of D-ribulose 1,5-bisphosphate, the primary event in carbon dioxide fixation, as well as the oxidative fragmentation of the pentose substrate in the photorespiration process. Both reactions occur simultaneously and in competition at the same active site. This Galium palustre (Common marsh bedstraw) protein is Ribulose bisphosphate carboxylase large chain.